A 471-amino-acid chain; its full sequence is UDP-N-acetylmuramate--L-alanine ligase (471 aa).

112–118 (GTHGKTT) provides a ligand contact to ATP.

The protein belongs to the MurCDEF family.

The protein resides in the cytoplasm. It catalyses the reaction UDP-N-acetyl-alpha-D-muramate + L-alanine + ATP = UDP-N-acetyl-alpha-D-muramoyl-L-alanine + ADP + phosphate + H(+). Its pathway is cell wall biogenesis; peptidoglycan biosynthesis. Cell wall formation. In Aromatoleum aromaticum (strain DSM 19018 / LMG 30748 / EbN1) (Azoarcus sp. (strain EbN1)), this protein is UDP-N-acetylmuramate--L-alanine ligase.